Reading from the N-terminus, the 33-residue chain is Protamine TP16 (33 aa).

Residues 1 to 33 (MPRRRRSSSRPVRRRRRARVSRRRRRRGRRRRR) form a disordered region.

Testis.

It is found in the nucleus. The protein resides in the chromosome. In terms of biological role, protamines substitute for histones in the chromatin of sperm during the haploid phase of spermatogenesis. They compact sperm DNA into a highly condensed, stable and inactive complex. This chain is Protamine TP16, found in Oncorhynchus mykiss (Rainbow trout).